The following is a 162-amino-acid chain: Precorrin-2 dehydrogenase (162 aa).

NAD(+) contacts are provided by residues 20–21 (SI) and 41–42 (PD).

The protein belongs to the precorrin-2 dehydrogenase / sirohydrochlorin ferrochelatase family.

The enzyme catalyses precorrin-2 + NAD(+) = sirohydrochlorin + NADH + 2 H(+). The protein operates within cofactor biosynthesis; adenosylcobalamin biosynthesis; sirohydrochlorin from precorrin-2: step 1/1. It functions in the pathway porphyrin-containing compound metabolism; siroheme biosynthesis; sirohydrochlorin from precorrin-2: step 1/1. Functionally, catalyzes the dehydrogenation of precorrin-2 to form sirohydrochlorin which is used as a precursor in both siroheme biosynthesis and in the anaerobic branch of adenosylcobalamin biosynthesis. The sequence is that of Precorrin-2 dehydrogenase (sirC) from Bacillus subtilis (strain 168).